Reading from the N-terminus, the 343-residue chain is 4-hydroxy-2-oxovalerate aldolase 1 (343 aa).

Residues 8 to 260 (VTVHDMTLRD…ETGVDVAKIT (253 aa)) enclose the Pyruvate carboxyltransferase domain. Residue 16–17 (RD) coordinates substrate. A Mn(2+)-binding site is contributed by Asp-17. The active-site Proton acceptor is His-20. The substrate site is built by Ser-170 and His-199. Residues His-199 and His-201 each contribute to the Mn(2+) site. Tyr-290 contacts substrate.

Belongs to the 4-hydroxy-2-oxovalerate aldolase family.

The enzyme catalyses (S)-4-hydroxy-2-oxopentanoate = acetaldehyde + pyruvate. In Dechloromonas aromatica (strain RCB), this protein is 4-hydroxy-2-oxovalerate aldolase 1.